Here is a 96-residue protein sequence, read N- to C-terminus: Large ribosomal subunit protein eL21 (96 aa).

This sequence belongs to the eukaryotic ribosomal protein eL21 family.

The chain is Large ribosomal subunit protein eL21 from Methanoregula boonei (strain DSM 21154 / JCM 14090 / 6A8).